The chain runs to 940 residues: Isoleucine--tRNA ligase (940 aa).

The 'HIGH' region motif lies at 58–68 (PYANGSIHIGH). Glu564 serves as a coordination point for L-isoleucyl-5'-AMP. Residues 605–609 (KMSKS) carry the 'KMSKS' region motif. Lys608 contacts ATP. Zn(2+) is bound by residues Cys903, Cys906, Cys923, and Cys926.

It belongs to the class-I aminoacyl-tRNA synthetase family. IleS type 1 subfamily. Monomer. Requires Zn(2+) as cofactor.

It localises to the cytoplasm. The enzyme catalyses tRNA(Ile) + L-isoleucine + ATP = L-isoleucyl-tRNA(Ile) + AMP + diphosphate. In terms of biological role, catalyzes the attachment of isoleucine to tRNA(Ile). As IleRS can inadvertently accommodate and process structurally similar amino acids such as valine, to avoid such errors it has two additional distinct tRNA(Ile)-dependent editing activities. One activity is designated as 'pretransfer' editing and involves the hydrolysis of activated Val-AMP. The other activity is designated 'posttransfer' editing and involves deacylation of mischarged Val-tRNA(Ile). This Shewanella baltica (strain OS195) protein is Isoleucine--tRNA ligase.